A 622-amino-acid polypeptide reads, in one-letter code: Palmitoyltransferase ZDHHC17 (622 aa).

The Cytoplasmic segment spans residues 1 to 294 (MADGPDEYDT…LKADKEFRQK (294 aa)). Residues 1–295 (MADGPDEYDT…KADKEFRQKV (295 aa)) form a necessary and sufficient for interaction with DNAJC5 and SNAP25 region. ANK repeat units follow at residues 41 to 76 (THVD…VRQP), 79 to 108 (ENVT…IVDQ), 113 to 142 (LNST…DPSL), 146 to 175 (EGCS…DVDM), 179 to 209 (NGMT…SVNL), 214 to 243 (HKNT…NVDA), and 247 to 276 (KGES…AKGY). 2 helical membrane-spanning segments follow: residues 295-315 (VMLG…DLNI) and 316-336 (DSWL…QFLS). Over 337-347 (KSFFDHSMHSA) the chain is Lumenal. A helical membrane pass occupies residues 348-368 (LPLGIYLATKFWMYVTWFFWF). Residues 369-371 (WND) are Cytoplasmic-facing. A helical membrane pass occupies residues 372 to 392 (LSFLSIHLPFLANSVALFYNF). Topologically, residues 393-470 (GKSWKSDPGI…GNCVGAGNHR (78 aa)) are lumenal. Residues 427–477 (IFCSTCLIRKPVRSKHCGVCNRCIAKFDHHCPWVGNCVGAGNHRYFMGYLF) enclose the DHHC domain. Catalysis depends on Cys457, which acts as the S-palmitoyl cysteine intermediate. Residues 471–491 (YFMGYLFFLLFMICWMIYGCV) traverse the membrane as a helical segment. At 492 to 506 (SYWGLHCETTYTKDG) the chain is on the cytoplasmic side. A helical transmembrane segment spans residues 507–526 (FWTYITQIATCSPWMFWMFL). At 527–529 (NSV) the chain is on the lumenal side. The helical transmembrane segment at 530–552 (FHFMWVAVLLMCQMYQITCLGIT) threads the bilayer. The Cytoplasmic portion of the chain corresponds to 553 to 622 (TNERMNARRY…QISGSGYQLV (70 aa)).

It belongs to the DHHC palmitoyltransferase family. AKR/ZDHHC17 subfamily. In terms of assembly, interacts (via ANK repeats) with numerous proteins (via the consensus sequence motif [VIAP]-[VIT]-x-x-Q-P). Interacts (via ANK repeats) with CLIP3. Interacts (via ANK repeats) with HTT. Interacts (via ANK repeats) with DNAJC5 (via C-terminus). Interacts (via ANK repeats) with MAP6. Interacts (via ANK repeats) with SNAP23. Interacts (via ANK repeats) with SNAP25. Interacts (via ANK repeats) with EVL. Interacts with SPRED1 and SPRED3. Interacts with GPM6A and OPTN. May interact (via ANK repeats) with SPRED2. May interact with NTRK1; may regulate its localization and function. Autopalmitoylated. Autopalmitoylation has a regulatory role in ZDHHC17-mediated Mg(2+) transport.

It localises to the golgi apparatus membrane. It is found in the cytoplasmic vesicle membrane. Its subcellular location is the presynaptic cell membrane. It carries out the reaction L-cysteinyl-[protein] + hexadecanoyl-CoA = S-hexadecanoyl-L-cysteinyl-[protein] + CoA. It catalyses the reaction L-cysteinyl-[protein] + tetradecanoyl-CoA = S-tetradecanoyl-L-cysteinyl-[protein] + CoA. The catalysed reaction is L-cysteinyl-[protein] + octadecanoyl-CoA = S-octadecanoyl-L-cysteinyl-[protein] + CoA. Palmitoyltransferase that catalyzes the addition of palmitate onto various protein substrates and is involved in a variety of cellular processes. Has no stringent fatty acid selectivity and in addition to palmitate can also transfer onto target proteins myristate from tetradecanoyl-CoA and stearate from octadecanoyl-CoA. Palmitoyltransferase specific for a subset of neuronal proteins, including SNAP25, DLG4/PSD95, GAD2, SYT1 and HTT. Also palmitoylates neuronal protein GPM6A as well as SPRED1 and SPRED3. Could also play a role in axonogenesis through the regulation of NTRK1 and the downstream ERK1/ERK2 signaling cascade. May be involved in the sorting or targeting of critical proteins involved in the initiating events of endocytosis at the plasma membrane. May play a role in Mg(2+) transport. Could also palmitoylate DNAJC5 and regulate its localization to the Golgi membrane. Palmitoylates CASP6, thereby preventing its dimerization and subsequent activation. This chain is Palmitoyltransferase ZDHHC17, found in Rattus norvegicus (Rat).